The chain runs to 339 residues: Ribosomal RNA large subunit methyltransferase M (339 aa).

S-adenosyl-L-methionine contacts are provided by residues Ser176, 206–209, Asp225, Asp245, and Asp261; that span reads APGG. Residue Lys290 is the Proton acceptor of the active site.

The protein belongs to the class I-like SAM-binding methyltransferase superfamily. RNA methyltransferase RlmE family. RlmM subfamily. As to quaternary structure, monomer.

The protein resides in the cytoplasm. The enzyme catalyses cytidine(2498) in 23S rRNA + S-adenosyl-L-methionine = 2'-O-methylcytidine(2498) in 23S rRNA + S-adenosyl-L-homocysteine + H(+). In terms of biological role, catalyzes the 2'-O-methylation at nucleotide C2498 in 23S rRNA. The sequence is that of Ribosomal RNA large subunit methyltransferase M from Halorhodospira halophila (strain DSM 244 / SL1) (Ectothiorhodospira halophila (strain DSM 244 / SL1)).